Consider the following 479-residue polypeptide: Ribulose bisphosphate carboxylase large chain (479 aa).

A propeptide spanning residues 1-2 (MS) is cleaved from the precursor. 2 residues coordinate substrate: Asn123 and Thr173. Residue Lys175 is the Proton acceptor of the active site. Substrate is bound at residue Lys177. Mg(2+) is bound by residues Lys201, Asp203, and Glu204. An N6-carboxylysine modification is found at Lys201. Ser208 is modified (phosphoserine). His294 (proton acceptor) is an active-site residue. Substrate contacts are provided by Arg295 and His327. Thr330 bears the Phosphothreonine mark. A substrate-binding site is contributed by Ser379.

This sequence belongs to the RuBisCO large chain family. Type I subfamily. Heterohexadecamer of 8 large chains and 8 small chains; disulfide-linked. The disulfide link is formed within the large subunit homodimers. The cofactor is Mg(2+). Post-translationally, the disulfide bond which can form in the large chain dimeric partners within the hexadecamer appears to be associated with oxidative stress and protein turnover.

Its subcellular location is the plastid. It is found in the chloroplast. It carries out the reaction 2 (2R)-3-phosphoglycerate + 2 H(+) = D-ribulose 1,5-bisphosphate + CO2 + H2O. The catalysed reaction is D-ribulose 1,5-bisphosphate + O2 = 2-phosphoglycolate + (2R)-3-phosphoglycerate + 2 H(+). In terms of biological role, ruBisCO catalyzes two reactions: the carboxylation of D-ribulose 1,5-bisphosphate, the primary event in carbon dioxide fixation, as well as the oxidative fragmentation of the pentose substrate in the photorespiration process. Both reactions occur simultaneously and in competition at the same active site. The chain is Ribulose bisphosphate carboxylase large chain from Olimarabidopsis pumila (Dwarf rocket).